The chain runs to 776 residues: MASLIYRQLLANSYTVDLSDEIENIGYAKSKNVTINPGPFAQTGYAPVNWGPGEVNDSTTVEPVLDGPYQPTNFNPPVNYWMLLSPLNAGVVVEGTNSIDRWLATVLVEPNVTTTVRTYTLFGVQEQISVENNSTTKWKFINLIKTTPPGNFTLYSTLLSEPKLHGIMKHGGQLWVYNGETQTLLLQDYVTSNYDSLTMTSFCDFYIIPRNQESTCTEYINNGLPPIQNTRNVVSVSISSRNIIHNRAQVNEDIVISKTSLWKGVQYNRDIINRFRFANAIIKSGGLGYKWSEISFKPANYQYTYTRDGEEITAHTTCSVNGVNDFSFNGGSLPTDFVISRYEVIKENSYVYVDYWDDSQAFRNMVYVRSLAANLNDVLCTGGDYSFALPVGQWPVMTGGAVMLHAAGVTLSTQFTDFVSLNSLRFRFSLSVEEPYFSITRTRVTRLYGLPAVNPNNDRDYYEIAGRFSLISLVPSNDDYQTPIMNSVTVRQDLERQLGELREEFNALSQEIAISQLIDLALLPLDMFSMFSGIQSSIDAAKSMATNVMKKFKKSKLASSVSTLTNSLSDAASSVSRSSSIRSVSSSVSAWTDVSNQFTDISNSVNSISTQTSTISRRLRLKEIATQTEGINFDDISAAVLKTKIDKSTQIAANNIPDVITEASEKFIPNRAYRVISNDNVFEASTDGRFFAYKVGTFEEIPFDVQKLADLVTDSPVISAIIDFKTLKNLNDNYGITREQAFNLLRSDPRVLREFINQDNPIIKNRIEQLILQCRL.

The spike head stretch occupies residues 65–224 (LDGPYQPTNF…TCTEYINNGL (160 aa)). Cysteine 203 and cysteine 216 form a disulfide bridge. The tract at residues 248–479 (AQVNEDIVIS…LISLVPSNDD (232 aa)) is spike body and stalk (antigen domain). Residues 308–310 (DGE) carry the DGE motif; interaction with ITGA2/ITGB1 heterodimer motif. Cysteines 318 and 380 form a disulfide. Positions 389–409 (LPVGQWPVMTGGAVMLHAAGV) are hydrophobic; possible role in virus entry into host cell. A YGL motif; interaction with ITGA4 motif is present at residues 448–450 (YGL). The stretch at 484 to 511 (IMNSVTVRQDLERQLGELREEFNALSQE) forms a coiled coil. The spike foot stretch occupies residues 510-776 (QEIAISQLID…IEQLILQCRL (267 aa)). The short motif at 644 to 646 (KID) is the KID motif; interaction with HSPA8 element.

The protein belongs to the rotavirus VP4 family. As to quaternary structure, homotrimer. VP4 adopts a dimeric appearance above the capsid surface, while forming a trimeric base anchored inside the capsid layer. Only hints of the third molecule are observed above the capsid surface. It probably performs a series of molecular rearrangements during viral entry. Prior to trypsin cleavage, it is flexible. The priming trypsin cleavage triggers its rearrangement into rigid spikes with approximate two-fold symmetry of their protruding parts. After an unknown second triggering event, cleaved VP4 may undergo another rearrangement, in which two VP5* subunits fold back on themselves and join a third subunit to form a tightly associated trimer, shaped like a folded umbrella. Interacts with VP6. Interacts with VP7. In terms of assembly, homotrimer. The trimer is coiled-coil stabilized by its C-terminus, however, its N-terminus, known as antigen domain or 'body', seems to be flexible allowing it to self-associate either as a dimer or a trimer. Post-translationally, proteolytic cleavage by trypsin results in activation of VP4 functions and greatly increases infectivity. The penetration into the host cell is dependent on trypsin treatment of VP4. It produces two peptides, VP5* and VP8* that remain associated with the virion. Cleavage of VP4 by trypsin probably occurs in vivo in the lumen of the intestine prior to infection of enterocytes. Trypsin seems to be incorporated into the three-layered viral particles but remains inactive as long as the viral outer capsid is intact and would only be activated upon the solubilization of the latter.

The protein resides in the virion. It localises to the host rough endoplasmic reticulum. Its subcellular location is the host cell membrane. It is found in the host cytoplasm. The protein localises to the host cytoskeleton. The protein resides in the host endoplasmic reticulum-Golgi intermediate compartment. In terms of biological role, spike-forming protein that mediates virion attachment to the host epithelial cell receptors and plays a major role in cell penetration, determination of host range restriction and virulence. Rotavirus attachment and entry into the host cell probably involves multiple sequential contacts between the outer capsid proteins VP4 and VP7, and the cell receptors. It is subsequently lost, together with VP7, following virus entry into the host cell. Following entry into the host cell, low intracellular or intravesicular Ca(2+) concentration probably causes the calcium-stabilized VP7 trimers to dissociate from the virion. This step is probably necessary for the membrane-disrupting entry step and the release of VP4, which is locked onto the virion by VP7. During the virus exit from the host cell, VP4 seems to be required to target the newly formed virions to the host cell lipid rafts. Functionally, forms the spike 'foot' and 'body' and acts as a membrane permeabilization protein that mediates release of viral particles from endosomal compartments into the cytoplasm. During entry, the part of VP5* that protrudes from the virus folds back on itself and reorganizes from a local dimer to a trimer. This reorganization may be linked to membrane penetration by exposing VP5* hydrophobic region. In integrin-dependent strains, VP5* targets the integrin heterodimer ITGA2/ITGB1 for cell attachment. Forms the head of the spikes and mediates the recognition of specific host cell surface glycans. It is the viral hemagglutinin and an important target of neutralizing antibodies. In sialic acid-dependent strains, VP8* binds to host cell sialic acid, most probably a ganglioside, providing the initial contact. In some other strains, VP8* mediates the attachment to histo-blood group antigens (HBGAs) for viral entry. This chain is Outer capsid protein VP4, found in Rotavirus A (strain RVA/Equine/United States/FI-14/1980/G3P4[12]) (RV-A).